A 290-amino-acid chain; its full sequence is Proteasome subunit beta (290 aa).

The propeptide at 1–58 (MTTSGGLTGPGAFGRLPQPFHQPGITSFVEFLALQAPDLLPGRLQMPAGGQPPEVPHG) is removed in mature form; by autocatalysis. Thr59 functions as the Nucleophile in the catalytic mechanism.

This sequence belongs to the peptidase T1B family. As to quaternary structure, the 20S proteasome core is composed of 14 alpha and 14 beta subunits that assemble into four stacked heptameric rings, resulting in a barrel-shaped structure. The two inner rings, each composed of seven catalytic beta subunits, are sandwiched by two outer rings, each composed of seven alpha subunits. The catalytic chamber with the active sites is on the inside of the barrel. Has a gated structure, the ends of the cylinder being occluded by the N-termini of the alpha-subunits. Is capped by the proteasome-associated ATPase, ARC.

It localises to the cytoplasm. The catalysed reaction is Cleavage of peptide bonds with very broad specificity.. The protein operates within protein degradation; proteasomal Pup-dependent pathway. With respect to regulation, the formation of the proteasomal ATPase ARC-20S proteasome complex, likely via the docking of the C-termini of ARC into the intersubunit pockets in the alpha-rings, may trigger opening of the gate for substrate entry. Interconversion between the open-gate and close-gate conformations leads to a dynamic regulation of the 20S proteasome proteolysis activity. Its function is as follows. Component of the proteasome core, a large protease complex with broad specificity involved in protein degradation. The polypeptide is Proteasome subunit beta (Acidothermus cellulolyticus (strain ATCC 43068 / DSM 8971 / 11B)).